Here is a 340-residue protein sequence, read N- to C-terminus: MTHSLIIEEVLAHPQDISWLPWAVQYFFFIGIAACAALFACYLHWRKKDAATEENRALLIAITCAITAPLALTADLHQTARVWHFYAWPTPWSWMPWGALFLPLFTGFLALWFLAQQIKRLFNKSYNVTKWLALASALCAVGLLIYTGREVSVVLARPIWFSYAFPVAMFLSALQAFFALMIVAARRDSVRLPKILWGQIWTLAALGLVVAMWVSGDTLSGTAIRQWITVALSAKYYAVGWVALWVCTLLFCSLALRHPLSQLRRVLLVLSALALCWLMRWTLLIQVQTVPKFNAQFNPYSLPGGTDGWLAILGTFGLWIALLIIIRETLNGLTRRLQHG.

Transmembrane regions (helical) follow at residues 19–39 (WLPW…AALF), 57–77 (ALLI…ADLH), 94–114 (WMPW…LWFL), 128–148 (VTKW…IYTG), 164–184 (AFPV…MIVA), 195–215 (ILWG…MWVS), 236–256 (YYAV…SLAL), 266–286 (VLLV…LLIQ), and 306–326 (TDGW…LIII).

This sequence belongs to the NrfD family. Probably composed of three subunits: TtrA, TtrB and TtrC.

The protein localises to the cell inner membrane. In terms of biological role, part of a membrane-bound tetrathionate reductase that catalyzes the reduction of tetrathionate to thiosulfate. TtrC probably anchors TtrA and TtrB to the periplasmic face of the cytoplasmic membrane. May transfer electrons from membrane quinol to TtrB. During mice infection, the ability to use tetrathionate as an electron acceptor is a growth advantage for S.typhimurium over the competing microbiota in the lumen of the inflamed gut. The sequence is that of Tetrathionate reductase subunit C (ttrC) from Salmonella typhimurium (strain LT2 / SGSC1412 / ATCC 700720).